The chain runs to 374 residues: MAENKHIAALNNNKPALSEDQAVQLIESLYGVKVLNIKPLPSYDDQNFYIKSCSEDPNGCCEYVMKITNSEDSRYGELLEAQTSVMVFLCSNGVPAQKPVFTKNGQSLSLETIDYGSTIQKQAVRLLTYLPGTPLARVVATPEILFDIGKMAANIDKMLAENFLHPNKTCFERGQFIWNLSNTSLLRKYAHAVKETELQKIIEDVITQYETFVLPNLNCFRKCINHGDLNDHNILVEKTSSPGSIQEQYKVSGILDFSDMSFGYYIFELAITIMYMMIESNDPLHAGGYVLAGFQSVIPLTDEEKDALFFLVNCRFSQSLVMARYSVQLCPENEEYLMITAKTGWKHLQTLHDMGKEAVEKIWFETADSYVATH.

Aspartate 228 (proton acceptor) is an active-site residue.

Belongs to the aminoglycoside phosphotransferase family.

It is found in the cytoplasm. It catalyses the reaction (5R)-5-hydroxy-L-lysine + GTP = (5R)-5-phosphooxy-L-lysine + GDP + H(+). Functionally, catalyzes the GTP-dependent phosphorylation of 5-hydroxy-L-lysine. In Xenopus laevis (African clawed frog), this protein is Hydroxylysine kinase (hykk).